The chain runs to 177 residues: R-phycoerythrin beta chain (177 aa).

Residues cysteine 50 and cysteine 61 each coordinate phycourobilin. N4-methylasparagine is present on asparagine 72. (2R,3E)-phycoerythrobilin contacts are provided by cysteine 82 and cysteine 158.

This sequence belongs to the phycobiliprotein family. In terms of assembly, heterodimer of an alpha and a beta chain. In terms of processing, contains two covalently linked phycoerythrobilin chromophores and one covalently linked phycourobilin chromophore.

It is found in the plastid. The protein resides in the chloroplast thylakoid membrane. Its function is as follows. Light-harvesting photosynthetic bile pigment-protein from the phycobiliprotein complex. The protein is R-phycoerythrin beta chain (cpeB) of Porphyra purpurea (Red seaweed).